The sequence spans 673 residues: MDPKLEQRARELRALLQKASIAYYVHDAPILEDSVYDRLYRELQELERAYPELITPDSPTQRVGEKPAEQFPTVSHRIPLYSLENAFNLEELKEWQERLWRVLGRTPEEGELEYVCELKIDGAALALTYVDGLLQRGATRGDGQSGEDITPNIRAIPSIPLRLATAAPPPVLEVRGEAYLPIAEFERINRERCSAGDPPFANPRNCAAGTLRQLDSRVVAARKLSFFAYALHWPEGWPSGDPPQTQWECLQRLKDLGLPVNPLSQVCRGLEEVVQFYERWRQAQLPYACDGVVVKLNSLRLQEEAGFTQKFPRWAIALKYPAQEVPTRIRAIVASVGRTGAVTPVAELEPVLLAGTTVSRASLHNADRLEELDVHIGDTAIVRKAGEIIPEVVGILKELRPPDAVPYRLPSHCPECGTLLVRPAGEAITRCPNPACPAKIRGQLQHWASRDAMDIEGLGEKRVAQLVEKLGVRTVADLYRLTPEHLESLEGMGSRSSQKLVQAIQRSRQQPWERVLYGLGIPHVGVVTAQILAQHFPAPELLAQARAEDIAQIYGIGAEIAEAVVAWFADPAHQKLLQELRELGIPALPRQAAPAVSQVLAGKKFVITGTLPTLSRQQAKAWIESRGGKVTASVSRQTDYVVVGSDPGSKLKQAQALGIPLLSEAELLALDPK.

NAD(+) contacts are provided by residues 33–37 (DSVYD), 82–83 (SL), and Glu-117. Lys-119 acts as the N6-AMP-lysine intermediate in catalysis. NAD(+) is bound by residues Arg-140, Glu-177, Lys-295, and Lys-319. Cys-413, Cys-416, Cys-431, and Cys-436 together coordinate Zn(2+). One can recognise a BRCT domain in the interval 595 to 673 (AVSQVLAGKK…EAELLALDPK (79 aa)).

Belongs to the NAD-dependent DNA ligase family. LigA subfamily. Mg(2+) is required as a cofactor. Requires Mn(2+) as cofactor.

The enzyme catalyses NAD(+) + (deoxyribonucleotide)n-3'-hydroxyl + 5'-phospho-(deoxyribonucleotide)m = (deoxyribonucleotide)n+m + AMP + beta-nicotinamide D-nucleotide.. Its function is as follows. DNA ligase that catalyzes the formation of phosphodiester linkages between 5'-phosphoryl and 3'-hydroxyl groups in double-stranded DNA using NAD as a coenzyme and as the energy source for the reaction. It is essential for DNA replication and repair of damaged DNA. This chain is DNA ligase, found in Synechococcus sp. (strain JA-3-3Ab) (Cyanobacteria bacterium Yellowstone A-Prime).